The primary structure comprises 214 residues: Phosphopantothenoylcysteine decarboxylase HAL3 (214 aa).

FMN contacts are provided by residues 30–32 and 55–57; these read GSV and TRA. Catalysis depends on H92, which acts as the Proton donor. Residues 108–111 and A142 each bind FMN; that span reads SANT. Residues N144, R174, and A176 each coordinate N-[(R)-4-phosphopantothenoyl]-L-cysteine. Catalysis depends on C177, which acts as the Proton donor. M185 serves as a coordination point for N-[(R)-4-phosphopantothenoyl]-L-cysteine.

This sequence belongs to the HFCD (homooligomeric flavin containing Cys decarboxylase) superfamily. As to quaternary structure, homotrimer. FMN is required as a cofactor. As to expression, mainly expressed in stems, to a lower extent in flowers, leaves and fruits, and at basal levels in roots.

The protein localises to the cell membrane. It localises to the cytoplasm. The enzyme catalyses N-[(R)-4-phosphopantothenoyl]-L-cysteine + H(+) = (R)-4'-phosphopantetheine + CO2. It participates in cofactor biosynthesis; coenzyme A biosynthesis; CoA from (R)-pantothenate: step 3/5. Functionally, involved in plant growth, and promotes salt and osmotic tolerance, probably via coenzyme A (CoA) accumulation and endogenous proline accumulation. Catalyzes the decarboxylation of 4'-phosphopantothenoylcysteine to 4'-phosphopantetheine, a key step in coenzyme A biosynthesis. Required for roots development. The sequence is that of Phosphopantothenoylcysteine decarboxylase HAL3 from Malus domestica (Apple).